The chain runs to 307 residues: Alpha N-terminal protein methyltransferase 1 (307 aa).

Over residues 38 to 54 (EPAPAPAAGSNGVAGEQ) the composition is skewed to low complexity. The tract at residues 38-60 (EPAPAPAAGSNGVAGEQEAGGGG) is disordered. S-adenosyl-L-methionine is bound by residues glycine 123, arginine 128, 145 to 147 (EPV), 179 to 180 (LQ), and glutamine 195.

It belongs to the methyltransferase superfamily. NTM1 family.

The catalysed reaction is N-terminal L-alanyl-L-prolyl-L-lysyl-[protein] + 3 S-adenosyl-L-methionine = N-terminal N,N,N-trimethyl-L-alanyl-L-prolyl-L-lysyl-[protein] + 3 S-adenosyl-L-homocysteine + 3 H(+). It carries out the reaction N-terminal L-seryl-L-prolyl-L-lysyl-[protein] + 3 S-adenosyl-L-methionine = N-terminal N,N,N-trimethyl-L-seryl-L-prolyl-L-lysyl-[protein] + 3 S-adenosyl-L-homocysteine + 3 H(+). The enzyme catalyses N-terminal L-prolyl-L-prolyl-L-lysyl-[protein] + 2 S-adenosyl-L-methionine = N-terminal N,N-dimethyl-L-prolyl-L-prolyl-L-lysyl-[protein] + 2 S-adenosyl-L-homocysteine + 2 H(+). Functionally, alpha-N-methyltransferase that methylates the N-terminus of target proteins containing the N-terminal motif [Ala/Pro/Ser]-Pro-Lys when the initiator Met is cleaved. Specifically catalyzes mono-, di- or tri-methylation of exposed alpha-amino group of Ala or Ser residue in the [Ala/Ser]-Pro-Lys motif and mono- or di-methylation of Pro in the Pro-Pro-Lys motif. This chain is Alpha N-terminal protein methyltransferase 1, found in Oryza sativa subsp. indica (Rice).